A 529-amino-acid chain; its full sequence is Peptide chain release factor 3 (529 aa).

Residues 10–279 (EQRRCFGIIS…ALVEMAPAPG (270 aa)) form the tr-type G domain. GTP-binding positions include 19–26 (SHPDAGKT), 87–91 (DTPGH), and 141–144 (NKMD).

This sequence belongs to the TRAFAC class translation factor GTPase superfamily. Classic translation factor GTPase family. PrfC subfamily.

The protein resides in the cytoplasm. Its function is as follows. Increases the formation of ribosomal termination complexes and stimulates activities of RF-1 and RF-2. It binds guanine nucleotides and has strong preference for UGA stop codons. It may interact directly with the ribosome. The stimulation of RF-1 and RF-2 is significantly reduced by GTP and GDP, but not by GMP. In Desulfatibacillum aliphaticivorans, this protein is Peptide chain release factor 3.